Reading from the N-terminus, the 214-residue chain is Pyrrolidone-carboxylate peptidase 2 (214 aa).

Active-site residues include Glu-78, Cys-141, and His-165.

It belongs to the peptidase C15 family. As to quaternary structure, homotetramer.

It localises to the cytoplasm. The catalysed reaction is Release of an N-terminal pyroglutamyl group from a polypeptide, the second amino acid generally not being Pro.. Its function is as follows. Removes 5-oxoproline from various penultimate amino acid residues except L-proline. In Streptococcus pneumoniae serotype 4 (strain ATCC BAA-334 / TIGR4), this protein is Pyrrolidone-carboxylate peptidase 2.